A 518-amino-acid polypeptide reads, in one-letter code: ORC1-type DNA replication protein 7 (518 aa).

94–98 (TGKTA) provides a ligand contact to ATP. The tract at residues 165–196 (DDDPNALEIGGSPGDDRTGNESSEGSDVSDSF) is disordered. Residues 186–196 (SSEGSDVSDSF) are compositionally biased toward low complexity. Residues Y318 and R330 each contribute to the ATP site.

It belongs to the CDC6/cdc18 family.

In terms of biological role, involved in regulation of DNA replication. Required to initiate DNA replication of the circular chromosome at a nearby autonomously replicating sequence (ARS) oriC1. This chain is ORC1-type DNA replication protein 7 (orc7), found in Halobacterium salinarum (strain ATCC 700922 / JCM 11081 / NRC-1) (Halobacterium halobium).